We begin with the raw amino-acid sequence, 160 residues long: S-adenosylmethionine decarboxylase proenzyme (160 aa).

S73 serves as the catalytic Schiff-base intermediate with substrate; via pyruvic acid. At S73 the chain carries Pyruvic acid (Ser); by autocatalysis. H78 acts as the Proton acceptor; for processing activity in catalysis. Catalysis depends on C93, which acts as the Proton donor; for catalytic activity.

The protein belongs to the prokaryotic AdoMetDC family. Type 1 subfamily. Heterotetramer of two alpha and two beta chains arranged as a dimer of alpha/beta heterodimers. It depends on pyruvate as a cofactor. Is synthesized initially as an inactive proenzyme. Formation of the active enzyme involves a self-maturation process in which the active site pyruvoyl group is generated from an internal serine residue via an autocatalytic post-translational modification. Two non-identical subunits are generated from the proenzyme in this reaction, and the pyruvate is formed at the N-terminus of the alpha chain, which is derived from the carboxyl end of the proenzyme. The post-translation cleavage follows an unusual pathway, termed non-hydrolytic serinolysis, in which the side chain hydroxyl group of the serine supplies its oxygen atom to form the C-terminus of the beta chain, while the remainder of the serine residue undergoes an oxidative deamination to produce ammonia and the pyruvoyl group blocking the N-terminus of the alpha chain.

The enzyme catalyses S-adenosyl-L-methionine + H(+) = S-adenosyl 3-(methylsulfanyl)propylamine + CO2. It participates in amine and polyamine biosynthesis; S-adenosylmethioninamine biosynthesis; S-adenosylmethioninamine from S-adenosyl-L-methionine: step 1/1. In terms of biological role, catalyzes the decarboxylation of S-adenosylmethionine to S-adenosylmethioninamine (dcAdoMet), the propylamine donor required for the synthesis of the polyamines spermine and spermidine from the diamine putrescine. The protein is S-adenosylmethionine decarboxylase proenzyme of Pseudomonas aeruginosa (strain LESB58).